Reading from the N-terminus, the 349-residue chain is MTLEATIVCLDNSEWMRNGDFTPSRSEAQKDAVNLICASKTQSNPESAVSIMSMAGKKPEVLVTLTQELSKILSGAQELKINGKIDFSTTMQIAQLALRHRQNNHQHPRIIAFVGSPLKETKEELIQLAKRLKKNGVAVDIINFGEVTENSDKLEAFINDVNNNDESHLLTVPPGPHILSDIILQSPIVESGSGQFGSEFINADTDPDLAMALKLSLEEEKQRQERERKAREEANGGSTNSGTTTTTAPTESNMDVNFEDDPELAEALALSMATDKMEVQSSTTNTDSQPPQQQQQPPTDDTSSEAFKDQDFLNSTLNSLPGVDPNRIKNALENLSKKDEDKDKDNEKK.

The VWFA domain maps to 5–188 (ATIVCLDNSE…LSDIILQSPI (184 aa)). Residues 204 to 223 (DTDPDLAMALKLSLEEEKQR) enclose the UIM 1 domain. Over residues 219–234 (EEKQRQERERKAREEA) the composition is skewed to basic and acidic residues. 2 disordered regions span residues 219 to 257 (EEKQRQERERKAREEANGGSTNSGTTTTTAPTESNMDVN) and 274 to 349 (TDKM…NEKK). Residues 235 to 253 (NGGSTNSGTTTTTAPTESN) are compositionally biased toward low complexity. A UIM 2 domain is found at 259 to 278 (EDDPELAEALALSMATDKME). Positions 280–301 (QSSTTNTDSQPPQQQQQPPTDD) are enriched in low complexity. Residues 335–349 (LSKKDEDKDKDNEKK) show a composition bias toward basic and acidic residues.

It belongs to the proteasome subunit S5A family. The 26S proteasome is composed of a core protease, known as the 20S proteasome, capped at one or both ends by the 19S regulatory complex (RC). The RC is composed of at least 18 different subunits in two subcomplexes, the base and the lid, which form the portions proximal and distal to the 20S proteolytic core, respectively.

Its function is as follows. Binds and presumably selects ubiquitin-conjugates for destruction. In Dictyostelium discoideum (Social amoeba), this protein is 26S proteasome non-ATPase regulatory subunit 4 (psmD4).